The following is a 653-amino-acid chain: E3 ubiquitin-protein ligase TRIM32 (653 aa).

Alanine 2 bears the N-acetylalanine mark. The RING-type zinc-finger motif lies at 20–65 (CPICMESFTEEQLRPKLLHCGHTICRQCLEKLLASSINGVRCPFCS). Phosphoserine; by CHEK2 is present on serine 55. Zn(2+)-binding residues include cysteine 100, cysteine 103, cysteine 123, and histidine 128. A B box-type zinc finger spans residues 103-133 (CGRRLPRQFCRSCGLVLCEPCREADHQPPGH). A coiled-coil region spans residues 138 to 197 (VKEAAEERRRDFGEKLTRLRELMGELQRRKAALEGVSKDLQARYKAVLQEYGHEERRVQD). A phosphoserine mark is found at serine 328, serine 335, and serine 339. NHL repeat units lie at residues 358–401 (LKKM…FTRK), 415–458 (DSFV…YTLD), 459–499 (GHCV…FTVD), 562–605 (GRQI…FPKG), and 606–646 (GGYS…YSYH).

This sequence belongs to the TRIM/RBCC family. As to quaternary structure, it self-associates. Interacts with DTNBP1. Interacts with PIAS4/PIASY upon treatment with UVB and TNF-alpha. Interacts with AMBRA1; promoting activation of ULK1 through unanchored 'Lys-63'-linked polyubiquitin chains. Interacts with TICAM1 and TAX1BP1; these interactions target TICAM1 to TAX1BP1-mediated selective autophagic degradation. (Microbial infection) Interacts with S.typhimurium protein SseK3; SseK3 does not glycosylate TRIM32. In terms of processing, ubiquitinated. Phosphorylation at Ser-55 by CHEK2 under oxidative stress, activates the E3 ligase activity and promotes ATG7 ubiquitination leading to positive regulation of the autophagosme assembly. As to expression, spleen, thymus, prostate, testis, ovary, intestine, colon and skeletal muscle.

The protein localises to the cytoplasm. Its subcellular location is the mitochondrion. It is found in the endoplasmic reticulum. It carries out the reaction S-ubiquitinyl-[E2 ubiquitin-conjugating enzyme]-L-cysteine + [acceptor protein]-L-lysine = [E2 ubiquitin-conjugating enzyme]-L-cysteine + N(6)-ubiquitinyl-[acceptor protein]-L-lysine.. Its pathway is protein modification; protein ubiquitination. Functionally, E3 ubiquitin ligase that plays a role in various biological processes including neural stem cell differentiation, innate immunity, inflammatory resonse and autophagy. Plays a role in virus-triggered induction of IFN-beta and TNF-alpha by mediating the ubiquitination of STING1. Mechanistically, targets STING1 for 'Lys-63'-linked ubiquitination which promotes the interaction of STING1 with TBK1. Regulates bacterial clearance and promotes autophagy in Mycobacterium tuberculosis-infected macrophages. Negatively regulates TLR3/4-mediated innate immune and inflammatory response by triggering the autophagic degradation of TICAM1 in an E3 activity-independent manner. Plays an essential role in oxidative stress induced cell death by inducing loss of transmembrane potential and enhancing mitochondrial reactive oxygen species (ROS) production during oxidative stress conditions. Ubiquitinates XIAP and targets it for proteasomal degradation. Ubiquitinates DTNBP1 (dysbindin) and promotes its degradation. May ubiquitinate BBS2. Ubiquitinates PIAS4/PIASY and promotes its degradation in keratinocytes treated with UVB and TNF-alpha. Also acts as a regulator of autophagy by mediating formation of unanchored 'Lys-63'-linked polyubiquitin chains that activate ULK1: interaction with AMBRA1 is required for ULK1 activation. Positively regulates dendritic branching by promoting ubiquitination and subsequent degradation of the epigenetic factor CDYL. Under metabolic stress and phosphorylation by CHK2, mediates 'Lys-63'-linked ubiquitination of ATG7 at 'Lys-45' to initiate autophagy. In terms of biological role, (Microbial infection) May play a significant role in mediating the biological activity of the HIV-1 Tat protein in vivo. Binds specifically to the activation domain of HIV-1 Tat and can also interact with the HIV-2 and EIAV Tat proteins in vivo. This chain is E3 ubiquitin-protein ligase TRIM32, found in Homo sapiens (Human).